We begin with the raw amino-acid sequence, 161 residues long: Nucleotide-binding protein Glov_3198 (161 aa).

This sequence belongs to the YajQ family.

Functionally, nucleotide-binding protein. The polypeptide is Nucleotide-binding protein Glov_3198 (Trichlorobacter lovleyi (strain ATCC BAA-1151 / DSM 17278 / SZ) (Geobacter lovleyi)).